The chain runs to 306 residues: Palmitoyl-protein thioesterase 1 (306 aa).

A signal peptide spans 1–27; it reads MASSSCLWLLALAFLLGSCASLALGHL. Disulfide bonds link C45–C46, C96–C128, and C152–C160. Residue S115 is part of the active site. 3 N-linked (GlcNAc...) asparagine glycosylation sites follow: N197, N212, and N232. Active-site residues include D233 and H289.

The protein belongs to the palmitoyl-protein thioesterase family. Interacts with CLN5, ATP5F1A and ATP5F1B. Post-translationally, glycosylated. In terms of tissue distribution, spleen, brain, seminal vesicle, and testis. Lower levels of activity in liver, heart, lung, and skeletal muscle.

The protein localises to the lysosome. It localises to the secreted. Its subcellular location is the golgi apparatus. The protein resides in the endoplasmic reticulum. It carries out the reaction S-hexadecanoyl-L-cysteinyl-[protein] + H2O = L-cysteinyl-[protein] + hexadecanoate + H(+). The catalysed reaction is hexadecanoyl-CoA + H2O = hexadecanoate + CoA + H(+). The enzyme catalyses S-hexadecanoyl-N-acetylcysteamine + H2O = N-acetylcysteamine + hexadecanoate + H(+). It catalyses the reaction S-hexadecanoyl-N-acetylcysteine methyl ester + H2O = N-acetylcysteine methyl ester + hexadecanoate + H(+). Its activity is regulated as follows. Palmitoylation reduces PPT1 enzymatic activity. Has thioesterase activity against fatty acid thioesters with 14 -18 carbons, including palmitoyl-CoA, S-palmitoyl-N-acetylcysteamine, and palmitoylated proteins. In contrast to PPT2, PPT1 can hydrolyze palmitoylated proteins and palmitoylcysteine. The protein is Palmitoyl-protein thioesterase 1 (PPT1) of Bos taurus (Bovine).